Reading from the N-terminus, the 120-residue chain is Histone H2B (120 aa).

The interval 1 to 26 (MAEPAKKKPKKLPKKDKGQKDIKRKK) is disordered. Alanine 2 bears the Blocked amino end (Ala) mark. Lysine 7, lysine 10, and lysine 11 each carry N6-acetyllysine. Lysine 115 is covalently cross-linked (Glycyl lysine isopeptide (Lys-Gly) (interchain with G-Cter in ubiquitin)).

Belongs to the histone H2B family. In terms of assembly, the nucleosome is a histone octamer containing two molecules each of H2A, H2B, H3 and H4 assembled in one H3-H4 heterotetramer and two H2A-H2B heterodimers. The octamer wraps approximately 147 bp of DNA. Can be acetylated to form H2BK6ac, H2BK33ac and H2BK34ac. In terms of processing, monoubiquitinated to form H2BK143ub1; may give a specific tag for epigenetic transcriptional activation.

The protein resides in the nucleus. Its subcellular location is the chromosome. Its function is as follows. Core component of nucleosome. Nucleosomes wrap and compact DNA into chromatin, limiting DNA accessibility to the cellular machineries which require DNA as a template. Histones thereby play a central role in transcription regulation, DNA repair, DNA replication and chromosomal stability. DNA accessibility is regulated via a complex set of post-translational modifications of histones, also called histone code, and nucleosome remodeling. The polypeptide is Histone H2B (Pisum sativum (Garden pea)).